Reading from the N-terminus, the 337-residue chain is Ribosomal RNA small subunit methyltransferase H (337 aa).

S-adenosyl-L-methionine contacts are provided by residues 33 to 35, Asp53, Asp101, and Gln108; that span reads AGH.

It belongs to the methyltransferase superfamily. RsmH family.

The protein localises to the cytoplasm. The enzyme catalyses cytidine(1402) in 16S rRNA + S-adenosyl-L-methionine = N(4)-methylcytidine(1402) in 16S rRNA + S-adenosyl-L-homocysteine + H(+). In terms of biological role, specifically methylates the N4 position of cytidine in position 1402 (C1402) of 16S rRNA. This Herpetosiphon aurantiacus (strain ATCC 23779 / DSM 785 / 114-95) protein is Ribosomal RNA small subunit methyltransferase H.